The sequence spans 334 residues: Glyceraldehyde-3-phosphate dehydrogenase (334 aa).

Residues 11-12 (RI), D33, and S119 contribute to the NAD(+) site. D-glyceraldehyde 3-phosphate is bound by residues 149–151 (SCT) and T180. Catalysis depends on C150, which acts as the Nucleophile. N181 is a binding site for NAD(+). D-glyceraldehyde 3-phosphate is bound by residues R197, 210-211 (TG), and R233. N314 provides a ligand contact to NAD(+).

Belongs to the glyceraldehyde-3-phosphate dehydrogenase family. As to quaternary structure, homotetramer.

It is found in the cytoplasm. It catalyses the reaction D-glyceraldehyde 3-phosphate + phosphate + NAD(+) = (2R)-3-phospho-glyceroyl phosphate + NADH + H(+). It functions in the pathway carbohydrate degradation; glycolysis; pyruvate from D-glyceraldehyde 3-phosphate: step 1/5. In terms of biological role, catalyzes the oxidative phosphorylation of glyceraldehyde 3-phosphate (G3P) to 1,3-bisphosphoglycerate (BPG) using the cofactor NAD. The first reaction step involves the formation of a hemiacetal intermediate between G3P and a cysteine residue, and this hemiacetal intermediate is then oxidized to a thioester, with concomitant reduction of NAD to NADH. The reduced NADH is then exchanged with the second NAD, and the thioester is attacked by a nucleophilic inorganic phosphate to produce BPG. The polypeptide is Glyceraldehyde-3-phosphate dehydrogenase (gap) (Clostridium pasteurianum).